The chain runs to 144 residues: Maximins 6/H10 (144 aa).

Positions 1–18 (MNFKYIVAVSFLIASAYA) are cleaved as a signal peptide. A propeptide spanning residues 19–43 (RSVKNDEQSLSQRDVLDEESLREIR) is cleaved from the precursor. An Asparagine amide modification is found at Asn-70. Residues 74-123 (TAEDHEVMKRLEAVMRDLDSLDHPEEASERETRGFNQEEIANRFTKKEKR) constitute a propeptide that is removed on maturation. Position 143 is a leucine amide (Leu-143).

The protein belongs to the bombinin family. Expressed by the skin glands.

Its subcellular location is the secreted. Its function is as follows. Maximin-6 shows antimicrobial activity against bacteria and against the fungus C.albicans. It has little hemolytic activity. Functionally, maximin-H10 shows antimicrobial activity against bacteria and against the fungus C.albicans. Shows strong hemolytic activity. This is Maximins 6/H10 from Bombina maxima (Giant fire-bellied toad).